The primary structure comprises 2124 residues: AMB antimetabolite synthetase AmbE (2124 aa).

Residues 456-847 (LRAALQPQAP…LGRIDEQVKI (392 aa)) are adenylation. The methyltransferase stretch occupies residues 950–1147 (DVGANIGLFS…DLLRRHGFEV (198 aa)). One can recognise a Carrier 1 domain in the interval 1251-1325 (APANATEAAL…ELARLLAAPA (75 aa)). S1286 carries the O-(pantetheine 4'-phosphoryl)serine modification. Residues 1359-1780 (DAYPMTSLQQ…ALLGDPVQPP (422 aa)) are condensation. Positions 1785 to 1859 (AEDSVELRRV…EVVRRCHAAD (75 aa)) constitute a Carrier 2 domain. The residue at position 1819 (S1819) is an O-(pantetheine 4'-phosphoryl)serine. A thioesterase region spans residues 1886–2107 (RLIALPPAGG…AAEEVCAILR (222 aa)).

The protein belongs to the NRP synthetase family. Requires pantetheine 4'-phosphate as cofactor.

It carries out the reaction holo-[peptidyl-carrier protein] + L-glutamate + ATP = L-glutamyl-[peptidyl-carrier protein] + AMP + diphosphate. Involved in the biosynthesis of the antimetabolite L-2-amino-4-methoxy-trans-3-butenoic acid (AMB), a non-proteinogenic amino acid which is toxic for prokaryotes and eukaryotes. Adenylates L-glutamate and loads it onto its first peptidyl carrier domain via a thioester linkage to the phosphopanthetheine moiety. The second peptidyl carrier domain is loaded with a L-alanine activated by AmbB. After formation by AmbB of the L-Glu-L-Ala dipeptide at the first carrier domain of AmbE, the condensation domain of AmbE probably condenses this dipeptide with the L-Ala residue attached at the second carrier domain of AmbE to give the L-Ala-L-Glu-L-Ala tripeptide. The central amino acid, L-Glu, would then undergo a series of modifications to be converted into AMB while the two flanking L-Ala residues remain in place. Finally, the L-Ala-AMB-L-Ala tripeptide is probably released by thioester cleavage via the thioester domain of AmbE. The sequence is that of AMB antimetabolite synthetase AmbE from Pseudomonas aeruginosa (strain ATCC 15692 / DSM 22644 / CIP 104116 / JCM 14847 / LMG 12228 / 1C / PRS 101 / PAO1).